The chain runs to 375 residues: Probable butyrate kinase 2 (375 aa).

It belongs to the acetokinase family.

The protein localises to the cytoplasm. It carries out the reaction butanoate + ATP = butanoyl phosphate + ADP. This is Probable butyrate kinase 2 from Thermotoga maritima (strain ATCC 43589 / DSM 3109 / JCM 10099 / NBRC 100826 / MSB8).